We begin with the raw amino-acid sequence, 440 residues long: Chromosome partition protein MukF (440 aa).

A leucine-zipper region spans residues 208 to 236; the sequence is LDETSGNLRELQDTLNAAGDKLQSQLLRI.

This sequence belongs to the MukF family. As to quaternary structure, interacts, and probably forms a ternary complex, with MukE and MukB via its C-terminal region. The complex formation is stimulated by calcium or magnesium. It is required for an interaction between MukE and MukB.

It localises to the cytoplasm. It is found in the nucleoid. Functionally, involved in chromosome condensation, segregation and cell cycle progression. May participate in facilitating chromosome segregation by condensation DNA from both sides of a centrally located replisome during cell division. Not required for mini-F plasmid partitioning. Probably acts via its interaction with MukB and MukE. Overexpression results in anucleate cells. It has a calcium binding activity. This Histophilus somni (strain 129Pt) (Haemophilus somnus) protein is Chromosome partition protein MukF.